The following is a 991-amino-acid chain: MSAEAADREAATSSRPCTPPQTSWFEFLLDDSLLEKHLQKPHSDPPPVQLIVQFLEQASKPTLNEQNQVQPPTDNKRNRTLKLLALKVAAHLKWNLDVLEKSLSVPVLNMLLNELLCASKVPPGTKHVDLDLSTLPPTTVMAVTLYNRWAIRTIVQSGFPVKPVKQGPQQPNVMNQIQQEKELTENILKVLKEQAEDSITVLEGALQLKRDFYVHTMRTLDLLAVEPGMVNGETENSTAGFKISSDEMQCQGCYDLGAVYFLQGPTNPSCYEKARDHFFRTKQLVSKIGAASDHYAIDEKRLAGYCQACGVLAPSNVVSQPATPYSQIHNFMKTNNYQGILKIFLEDHLNNSLPDQFRQSVLRELFQKSQQGNGALAELCFKVCACNTVYDILHGQPVTVQFHQLFMKPSKEKIDFLLEVCSRSLMSDQASEASKRKIATFLKNLCLEIEDLQLVFMISSHELFMKMLTDEESKMVVEHLRKKTSRVSMCTKPITSFYDIPASASVNIGQLEHQLILTVDPWRIRQILIELHGMTSDRQYWKVSSKWEVPTIYSGSILGIKDNLTRDLVYILLAKGLHCSAIKDYPRAKQLLSACLELVTEFSPKLRQVMLNEMLLLDIYTYEAVSAQERPPPELISRVRGYLEMRIPDIPLRQVVAEECVAFLLNWRENECLTLQVPASLVQSNPYVKLGQLLAATCKELPGPDSRRTAKDLWEVVVQICSVSNQHKRNNDGRVCLIKNRDSTMGIMYRNELVSFIKKLREPLVLTTLLSLFVKLHNLREDIVNDITAEHISIWPSCIPNLQAVDFDAVAVTVKELVSYALTINSNSHSWLTIQADIYFATNEYSAALNYYLQAGAVCSDFFTKQVPPEVYTDQVIKRMIKCCSMLNCHTQVAILCQFLREIDYKTAFKALQEQNSHDGMDSYYDYIWDVTILEYLTYLHHKRGETDKRQIAIKAIGQTELNASNPDEVLQLAAQRRKKKFLQSMAKLYF.

Residues 1-10 are compositionally biased toward basic and acidic residues; sequence MSAEAADREA. The tract at residues 1-22 is disordered; it reads MSAEAADREAATSSRPCTPPQT. Residues 11–22 are compositionally biased toward polar residues; the sequence is ATSSRPCTPPQT. Residues 24–29 carry the WFEF motif motif; the sequence is WFEFLL. TPR repeat units lie at residues 250–288, 319–355, 569–602, and 829–862; these read CQGCYDLGAVYFLQGPTNPSCYEKARDHFFRTKQLVSKI, SQPATPYSQIHNFMKTNNYQGILKIFLEDHLNNSLPD, VYILLAKGLHCSAIKDYPRAKQLLSACLELVTEF, and HSWLTIQADIYFATNEYSAALNYYLQAGAVCSDF.

It belongs to the Integrator subunit 8 family. Component of the Integrator complex, composed of core subunits INTS1, INTS2, INTS3, INTS4, INTS5, INTS6, INTS7, INTS8, INTS9/RC74, INTS10, INTS11/CPSF3L, INTS12, INTS13, INTS14 and INTS15. The core complex associates with protein phosphatase 2A subunits PPP2CA and PPP2R1A, to form the Integrator-PP2A (INTAC) complex.

The protein resides in the nucleus. It localises to the chromosome. Its function is as follows. Component of the integrator complex, a multiprotein complex that terminates RNA polymerase II (Pol II) transcription in the promoter-proximal region of genes. The integrator complex provides a quality checkpoint during transcription elongation by driving premature transcription termination of transcripts that are unfavorably configured for transcriptional elongation: the complex terminates transcription by (1) catalyzing dephosphorylation of the C-terminal domain (CTD) of Pol II subunit POLR2A/RPB1 and SUPT5H/SPT5, (2) degrading the exiting nascent RNA transcript via endonuclease activity and (3) promoting the release of Pol II from bound DNA. The integrator complex is also involved in terminating the synthesis of non-coding Pol II transcripts, such as enhancer RNAs (eRNAs), small nuclear RNAs (snRNAs), telomerase RNAs and long non-coding RNAs (lncRNAs). Within the integrator complex, INTS8 is required for the recruitment of protein phosphatase 2A (PP2A) to transcription pause-release checkpoint. The sequence is that of Integrator complex subunit 8 (ints8) from Xenopus laevis (African clawed frog).